Here is a 279-residue protein sequence, read N- to C-terminus: Acetylglutamate kinase (279 aa).

Substrate is bound by residues 64-65 (GG), arginine 86, and asparagine 177.

The protein belongs to the acetylglutamate kinase family. ArgB subfamily.

It localises to the cytoplasm. The catalysed reaction is N-acetyl-L-glutamate + ATP = N-acetyl-L-glutamyl 5-phosphate + ADP. It participates in amino-acid biosynthesis; L-arginine biosynthesis; N(2)-acetyl-L-ornithine from L-glutamate: step 2/4. In terms of biological role, catalyzes the ATP-dependent phosphorylation of N-acetyl-L-glutamate. The polypeptide is Acetylglutamate kinase (Campylobacter jejuni subsp. jejuni serotype O:2 (strain ATCC 700819 / NCTC 11168)).